The primary structure comprises 398 residues: Putative F-box/kelch-repeat protein At2g29780 (398 aa).

Residues 1–46 (MAIISETSDDGSHGGVPNKKPEELHKNPKEDDHQEEEVENHPPIPR) form a disordered region. Over residues 19–32 (KKPEELHKNPKEDD) the composition is skewed to basic and acidic residues. The 48-residue stretch at 43–90 (PIPRQIPQALIRRTVALIKRCHYPSLSLLSKAFRIVISSPELHQTRSS) folds into the F-box domain. 4 Kelch repeats span residues 148–195 (KMYV…VING), 196–241 (KIYV…GFVT), 243–289 (VVMQ…VIED), and 295–342 (DPYC…GGKL).

This chain is Putative F-box/kelch-repeat protein At2g29780, found in Arabidopsis thaliana (Mouse-ear cress).